A 452-amino-acid polypeptide reads, in one-letter code: Probable ECA polymerase (452 aa).

11 helical membrane passes run 6-26 (FSGL…LTWF), 37-57 (VFFS…TSVL), 63-83 (VGVA…CFYG), 118-138 (VILM…NGFL), 155-175 (GVAL…VYFL), 181-201 (AWLF…MIVG), 207-227 (IIIA…ISLW), 228-248 (MLAA…LKRY), 341-361 (LVVM…GLII), 378-398 (YKAA…IVLA), and 410-430 (VFFL…FWLF).

It belongs to the WzyE family. Probably part of a complex composed of WzxE, WzyE and WzzE.

The protein localises to the cell inner membrane. It participates in bacterial outer membrane biogenesis; enterobacterial common antigen biosynthesis. Its function is as follows. Probably involved in the polymerization of enterobacterial common antigen (ECA) trisaccharide repeat units. The polypeptide is Probable ECA polymerase (Salmonella choleraesuis (strain SC-B67)).